The primary structure comprises 270 residues: Shikimate dehydrogenase (NADP(+)) (270 aa).

Shikimate is bound by residues 14–16 (SKS) and Thr-61. The active-site Proton acceptor is Lys-65. Shikimate-binding residues include Asn-86 and Asp-101. NADP(+) contacts are provided by residues 126–130 (GAGGA), 150–155 (NRTVSK), and Met-213. Tyr-215 contacts shikimate. NADP(+) is bound at residue Gly-237.

The protein belongs to the shikimate dehydrogenase family. In terms of assembly, homodimer.

It carries out the reaction shikimate + NADP(+) = 3-dehydroshikimate + NADPH + H(+). The protein operates within metabolic intermediate biosynthesis; chorismate biosynthesis; chorismate from D-erythrose 4-phosphate and phosphoenolpyruvate: step 4/7. Involved in the biosynthesis of the chorismate, which leads to the biosynthesis of aromatic amino acids. Catalyzes the reversible NADPH linked reduction of 3-dehydroshikimate (DHSA) to yield shikimate (SA). In Hahella chejuensis (strain KCTC 2396), this protein is Shikimate dehydrogenase (NADP(+)).